Reading from the N-terminus, the 416-residue chain is Gamma-glutamyl phosphate reductase (416 aa).

It belongs to the gamma-glutamyl phosphate reductase family.

It is found in the cytoplasm. It carries out the reaction L-glutamate 5-semialdehyde + phosphate + NADP(+) = L-glutamyl 5-phosphate + NADPH + H(+). It participates in amino-acid biosynthesis; L-proline biosynthesis; L-glutamate 5-semialdehyde from L-glutamate: step 2/2. Its function is as follows. Catalyzes the NADPH-dependent reduction of L-glutamate 5-phosphate into L-glutamate 5-semialdehyde and phosphate. The product spontaneously undergoes cyclization to form 1-pyrroline-5-carboxylate. This chain is Gamma-glutamyl phosphate reductase, found in Salmonella paratyphi A (strain AKU_12601).